The primary structure comprises 102 residues: Aspartyl/glutamyl-tRNA(Asn/Gln) amidotransferase subunit C (102 aa).

Belongs to the GatC family. Heterotrimer of A, B and C subunits.

The enzyme catalyses L-glutamyl-tRNA(Gln) + L-glutamine + ATP + H2O = L-glutaminyl-tRNA(Gln) + L-glutamate + ADP + phosphate + H(+). It carries out the reaction L-aspartyl-tRNA(Asn) + L-glutamine + ATP + H2O = L-asparaginyl-tRNA(Asn) + L-glutamate + ADP + phosphate + 2 H(+). In terms of biological role, allows the formation of correctly charged Asn-tRNA(Asn) or Gln-tRNA(Gln) through the transamidation of misacylated Asp-tRNA(Asn) or Glu-tRNA(Gln) in organisms which lack either or both of asparaginyl-tRNA or glutaminyl-tRNA synthetases. The reaction takes place in the presence of glutamine and ATP through an activated phospho-Asp-tRNA(Asn) or phospho-Glu-tRNA(Gln). This chain is Aspartyl/glutamyl-tRNA(Asn/Gln) amidotransferase subunit C, found in Bordetella parapertussis (strain 12822 / ATCC BAA-587 / NCTC 13253).